We begin with the raw amino-acid sequence, 480 residues long: Protein nucleotidyltransferase YdiU (480 aa).

ATP is bound by residues Gly86, Gly88, Arg89, Lys109, Asp121, Gly122, Arg172, and Arg179. Asp248 acts as the Proton acceptor in catalysis. The Mg(2+) site is built by Asn249 and Asp258. Asp258 provides a ligand contact to ATP.

This sequence belongs to the SELO family. Requires Mg(2+) as cofactor. Mn(2+) serves as cofactor.

The enzyme catalyses L-seryl-[protein] + ATP = 3-O-(5'-adenylyl)-L-seryl-[protein] + diphosphate. The catalysed reaction is L-threonyl-[protein] + ATP = 3-O-(5'-adenylyl)-L-threonyl-[protein] + diphosphate. It carries out the reaction L-tyrosyl-[protein] + ATP = O-(5'-adenylyl)-L-tyrosyl-[protein] + diphosphate. It catalyses the reaction L-histidyl-[protein] + UTP = N(tele)-(5'-uridylyl)-L-histidyl-[protein] + diphosphate. The enzyme catalyses L-seryl-[protein] + UTP = O-(5'-uridylyl)-L-seryl-[protein] + diphosphate. The catalysed reaction is L-tyrosyl-[protein] + UTP = O-(5'-uridylyl)-L-tyrosyl-[protein] + diphosphate. In terms of biological role, nucleotidyltransferase involved in the post-translational modification of proteins. It can catalyze the addition of adenosine monophosphate (AMP) or uridine monophosphate (UMP) to a protein, resulting in modifications known as AMPylation and UMPylation. The chain is Protein nucleotidyltransferase YdiU from Salmonella enteritidis PT4 (strain P125109).